The chain runs to 489 residues: Dipeptide and tripeptide permease B (489 aa).

At 1–27 the chain is on the cytoplasmic side; that stretch reads MNTTAPTGLLQQPRPFFMIFFVELWER. A helical membrane pass occupies residues 28–48; sequence FGYYGVQGILAVFFVKQLGFS. The Periplasmic segment spans residues 49 to 52; that stretch reads QEQA. Residues 53–73 form a helical membrane-spanning segment; it reads FITFGAFAALVYGLISIGGYV. The Cytoplasmic segment spans residues 74–82; the sequence is GDHLLGTKR. The chain crosses the membrane as a helical span at residues 83–103; that stretch reads TLVLGAIVLAIGYFMTGMSLL. Over 104–106 the chain is Periplasmic; sequence NPD. Residues 107 to 127 traverse the membrane as a helical segment; that stretch reads LIFIALGTIAVGNGLFKANPA. Over 128-146 the chain is Cytoplasmic; it reads SLLSKCYQPKDPRLDGAFT. Residues 147–167 traverse the membrane as a helical segment; the sequence is LFYMSINIGSLLSLSLAPVIA. The Periplasmic segment spans residues 168 to 172; it reads DKFGY. Residues 173–193 form a helical membrane-spanning segment; sequence AVTYNLCGAGLIVALLVYFAC. At 194–214 the chain is on the cytoplasmic side; that stretch reads RGMVKNIGSEPDHKPLRFRNL. A helical membrane pass occupies residues 215–235; the sequence is LLVLLGTVVMIFLCAWLMHNV. Residue K236 is a topological domain, periplasmic. A helical membrane pass occupies residues 237–257; it reads IANLVLIVLSIVVTIFFFREA. Residues 258 to 267 lie on the Cytoplasmic side of the membrane; that stretch reads FRLDKTGRNK. A helical membrane pass occupies residues 268-288; the sequence is MFVAFILMIEAVLFYILYAQM. Residues 289–315 are Periplasmic-facing; sequence PTSLNFFAINNVHHEILGFAINPVSFQ. A helical transmembrane segment spans residues 316–338; sequence ALNPFWVVVASPVLAAIYTRLGS. At 339–348 the chain is on the cytoplasmic side; sequence KGKDLTMPMK. A helical transmembrane segment spans residues 349–369; that stretch reads FTLGMFLCALGFLTAAAGMWF. The Periplasmic portion of the chain corresponds to 370–379; it reads ADAQGLTSPW. A helical membrane pass occupies residues 380-400; sequence FIVLVYLFQSLGELLISALGL. The Cytoplasmic segment spans residues 401 to 410; that stretch reads AMVAALVPQH. A helical transmembrane segment spans residues 411-431; it reads LMGFILGMWFLTQAAAFLLGG. Over 432-454 the chain is Periplasmic; sequence YVATFTAVPENITDPLQTLPIYT. A helical transmembrane segment spans residues 455–475; the sequence is GVFSKIGLVTLAVTVVMAIMV. The Cytoplasmic segment spans residues 476–489; it reads PWLNRMINTPGTEQ.

This sequence belongs to the major facilitator superfamily. Proton-dependent oligopeptide transporter (POT/PTR) (TC 2.A.17) family. DtpB subfamily.

Its subcellular location is the cell inner membrane. Functionally, proton-dependent permease that transports di- and tripeptides. This is Dipeptide and tripeptide permease B from Salmonella typhimurium (strain LT2 / SGSC1412 / ATCC 700720).